We begin with the raw amino-acid sequence, 196 residues long: Late protein I196L (196 aa).

A run of 2 repeats spans residues 28 to 48 (SIYL…PTTS) and 49 to 70 (SNSL…TTTS). The stretch at 71-92 (SNYLTSAISTNISDKEEDTPFS) is one 3; approximate repeat.

This sequence belongs to the asfivirus I196L family.

In African swine fever virus (isolate Warthog/Namibia/Wart80/1980) (ASFV), this protein is Late protein I196L.